The sequence spans 124 residues: Cytochrome c2 (124 aa).

Residue Gln-1 is modified to Pyrrolidone carboxylic acid. Residues Cys-16, Cys-19, His-20, and Met-85 each contribute to the heme c site.

Belongs to the cytochrome c family. Post-translationally, binds 1 heme c group covalently per subunit.

Its subcellular location is the periplasm. Its function is as follows. Cytochrome c2 is found mainly in purple, non-sulfur, photosynthetic bacteria where it functions as the electron donor to the oxidized bacteriochlorophyll in the photophosphorylation pathway. However, it may also have a role in the respiratory chain and is found in some non-photosynthetic bacteria. The chain is Cytochrome c2 from Afifella marina (Rhodobium marinum).